The primary structure comprises 491 residues: Keratin, type I cytoskeletal 39 (491 aa).

Residues 1–96 form a head region; that stretch reads MDTKGCTTTN…WYGEGINSNE (96 aa). An IF rod domain is found at 96–407; that stretch reads EKETMQILNE…SLLESSDGKR (312 aa). The coil 1A stretch occupies residues 97-131; sequence KETMQILNERLANYLQKVRMLERENAELESKIQEE. Residues 132–142 form a linker 1 region; the sequence is SNKELPVLCPD. The segment at 143–243 is coil 1B; it reads YLSYYTTIEE…HKEEINSLQC (101 aa). The tract at residues 244–259 is linker 12; sequence QLGERLDIEVTAAPSA. The interval 260–403 is coil 2; the sequence is DLNQVLQEMR…TTYRSLLESS (144 aa). The tail stretch occupies residues 404-491; the sequence is DGKRPCYPRA…PCFIIRPAKV (88 aa).

It belongs to the intermediate filament family. Heterotetramer of two type I and two type II keratins. As to expression, expressed in skin and scalp. In the hair follicle, it is present in the upper hair cuticle and the upper cortex. Also present in the in the upper portion of beard hairs (at protein level).

Functionally, may play a role in late hair differentiation. The protein is Keratin, type I cytoskeletal 39 (KRT39) of Homo sapiens (Human).